Reading from the N-terminus, the 624-residue chain is Chaperone protein HtpG (624 aa).

The tract at residues 1 to 336 is a; substrate-binding; it reads MSMKGQETRG…SNDLPLNVSR (336 aa). Residues 337–552 are b; sequence EILQDSRVTQ…ADEMSTQMAK (216 aa). Residues 553–624 form a c region; sequence LFAAAGQQAP…IRRMNQLLTA (72 aa).

This sequence belongs to the heat shock protein 90 family. In terms of assembly, homodimer.

It localises to the cytoplasm. Molecular chaperone. Has ATPase activity. The sequence is that of Chaperone protein HtpG from Yersinia enterocolitica serotype O:8 / biotype 1B (strain NCTC 13174 / 8081).